We begin with the raw amino-acid sequence, 473 residues long: 3-isopropylmalate dehydratase large subunit (473 aa).

The [4Fe-4S] cluster site is built by Cys-354, Cys-414, and Cys-417. A disordered region spans residues Leu-425–Arg-448.

The protein belongs to the aconitase/IPM isomerase family. LeuC type 1 subfamily. In terms of assembly, heterodimer of LeuC and LeuD. [4Fe-4S] cluster is required as a cofactor.

The enzyme catalyses (2R,3S)-3-isopropylmalate = (2S)-2-isopropylmalate. It functions in the pathway amino-acid biosynthesis; L-leucine biosynthesis; L-leucine from 3-methyl-2-oxobutanoate: step 2/4. In terms of biological role, catalyzes the isomerization between 2-isopropylmalate and 3-isopropylmalate, via the formation of 2-isopropylmaleate. The protein is 3-isopropylmalate dehydratase large subunit of Acidothermus cellulolyticus (strain ATCC 43068 / DSM 8971 / 11B).